A 100-amino-acid chain; its full sequence is Large ribosomal subunit protein bL21 (100 aa).

It belongs to the bacterial ribosomal protein bL21 family. As to quaternary structure, part of the 50S ribosomal subunit. Contacts protein L20.

Functionally, this protein binds to 23S rRNA in the presence of protein L20. The sequence is that of Large ribosomal subunit protein bL21 from Wolbachia pipientis subsp. Culex pipiens (strain wPip).